The chain runs to 593 residues: Proteasome-associated ATPase (593 aa).

The stretch at 23–95 (LLSQISYLEE…LKEEVDRLGQ (73 aa)) forms a coiled coil. 282-287 (GCGKTL) serves as a coordination point for ATP. A docks into pockets in the proteasome alpha-ring region spans residues 592 to 593 (YL).

It belongs to the AAA ATPase family. As to quaternary structure, homohexamer. Assembles into a hexameric ring structure that caps the 20S proteasome core. Strongly interacts with the prokaryotic ubiquitin-like protein Pup through a hydrophobic interface; the interacting region of ARC lies in its N-terminal coiled-coil domain. There is one Pup binding site per ARC hexamer ring. Upon ATP-binding, the C-terminus of ARC interacts with the alpha-rings of the proteasome core, possibly by binding to the intersubunit pockets.

The protein operates within protein degradation; proteasomal Pup-dependent pathway. Its function is as follows. ATPase which is responsible for recognizing, binding, unfolding and translocation of pupylated proteins into the bacterial 20S proteasome core particle. May be essential for opening the gate of the 20S proteasome via an interaction with its C-terminus, thereby allowing substrate entry and access to the site of proteolysis. Thus, the C-termini of the proteasomal ATPase may function like a 'key in a lock' to induce gate opening and therefore regulate proteolysis. The protein is Proteasome-associated ATPase of Geodermatophilus obscurus (strain ATCC 25078 / DSM 43160 / JCM 3152 / CCUG 61914 / KCC A-0152 / KCTC 9177 / NBRC 13315 / NRRL B-3577 / G-20).